The sequence spans 278 residues: Urease accessory protein UreD 1 (278 aa).

This sequence belongs to the UreD family. In terms of assembly, ureD, UreF and UreG form a complex that acts as a GTP-hydrolysis-dependent molecular chaperone, activating the urease apoprotein by helping to assemble the nickel containing metallocenter of UreC. The UreE protein probably delivers the nickel.

The protein resides in the cytoplasm. Required for maturation of urease via the functional incorporation of the urease nickel metallocenter. The protein is Urease accessory protein UreD 1 of Bradyrhizobium sp. (strain ORS 278).